We begin with the raw amino-acid sequence, 491 residues long: Stage IV sporulation protein A (491 aa).

Positions 23-30 (GPVRTGKS) match the Walker A motif; involved in ATP-binding motif. 23 to 30 (GPVRTGKS) contributes to the ATP binding site. Residues 334–362 (QLLSLITRLSKVKNEYDKIESALIDAKIK) are a coiled coil.

Interacts (via Walker A motif) with SipL (via C-terminus LysM domain).

The protein resides in the cytoplasm. It catalyses the reaction ATP + H2O = ADP + phosphate + H(+). Functionally, ATPase. Has a role at an early stage in the morphogenesis of the spore coat and is required for proper coat localization to the forespore. This is Stage IV sporulation protein A from Clostridioides difficile (strain 630) (Peptoclostridium difficile).